Here is a 340-residue protein sequence, read N- to C-terminus: NADH-quinone oxidoreductase subunit H (340 aa).

The next 8 membrane-spanning stretches (helical) occupy residues 4–24 (TIGI…PLLI), 78–98 (YLFV…WAVI), 113–133 (VLYL…AGWA), 151–171 (VSYE…AGSM), 184–204 (MLHW…IAGI), 244–264 (SMIL…LSPF), 273–293 (IFFV…FLFV), and 316–336 (VLIP…VAHV).

Belongs to the complex I subunit 1 family. In terms of assembly, NDH-1 is composed of 14 different subunits. Subunits NuoA, H, J, K, L, M, N constitute the membrane sector of the complex.

It is found in the cell inner membrane. It catalyses the reaction a quinone + NADH + 5 H(+)(in) = a quinol + NAD(+) + 4 H(+)(out). Functionally, NDH-1 shuttles electrons from NADH, via FMN and iron-sulfur (Fe-S) centers, to quinones in the respiratory chain. The immediate electron acceptor for the enzyme in this species is believed to be ubiquinone. Couples the redox reaction to proton translocation (for every two electrons transferred, four hydrogen ions are translocated across the cytoplasmic membrane), and thus conserves the redox energy in a proton gradient. This subunit may bind ubiquinone. The chain is NADH-quinone oxidoreductase subunit H from Legionella pneumophila (strain Corby).